Consider the following 208-residue polypeptide: Large ribosomal subunit protein uL4 (208 aa).

A disordered region spans residues 58–77 (RGGGRKPWRQKGTGRARQGS). Residues 60 to 71 (GGRKPWRQKGTG) show a composition bias toward basic residues.

It belongs to the universal ribosomal protein uL4 family. In terms of assembly, part of the 50S ribosomal subunit.

Functionally, one of the primary rRNA binding proteins, this protein initially binds near the 5'-end of the 23S rRNA. It is important during the early stages of 50S assembly. It makes multiple contacts with different domains of the 23S rRNA in the assembled 50S subunit and ribosome. Its function is as follows. Forms part of the polypeptide exit tunnel. The protein is Large ribosomal subunit protein uL4 of Caldicellulosiruptor bescii (strain ATCC BAA-1888 / DSM 6725 / KCTC 15123 / Z-1320) (Anaerocellum thermophilum).